Reading from the N-terminus, the 95-residue chain is Acylphosphatase (95 aa).

The region spanning 7 to 93 is the Acylphosphatase-like domain; that stretch reads TWQLFAHGRV…QLFDRFDWLP (87 aa). Active-site residues include Arg22 and Asn40.

This sequence belongs to the acylphosphatase family.

The catalysed reaction is an acyl phosphate + H2O = a carboxylate + phosphate + H(+). This Cupriavidus metallidurans (strain ATCC 43123 / DSM 2839 / NBRC 102507 / CH34) (Ralstonia metallidurans) protein is Acylphosphatase (acyP).